Consider the following 616-residue polypeptide: Homeodomain-interacting protein kinase 4 (616 aa).

Residues 11 to 347 (YDIIEVLGKG…PSAALRHPFV (337 aa)) enclose the Protein kinase domain. Residues 17 to 25 (LGKGTFGEV) and K40 contribute to the ATP site. The active-site Proton acceptor is D136. Positions 487 to 616 (HKARKAPAGS…SFLQHVGGHH (130 aa)) are disordered. The span at 497–512 (KSDSNFSNLIRLSQAS) shows a compositional bias: polar residues. A Phosphoserine modification is found at S512. The segment covering 542 to 560 (REGDGPSIKDRPMDAERSG) has biased composition (basic and acidic residues).

It belongs to the protein kinase superfamily. CMGC Ser/Thr protein kinase family. HIPK subfamily. In terms of processing, autophosphorylated.

The protein resides in the cytoplasm. It carries out the reaction L-seryl-[protein] + ATP = O-phospho-L-seryl-[protein] + ADP + H(+). It catalyses the reaction L-threonyl-[protein] + ATP = O-phospho-L-threonyl-[protein] + ADP + H(+). Functionally, protein kinase that phosphorylates TP53, and thus induces TP53 repression of BIRC5 promoter. May act as a corepressor of transcription factors (Potential). This chain is Homeodomain-interacting protein kinase 4 (Hipk4), found in Rattus norvegicus (Rat).